We begin with the raw amino-acid sequence, 316 residues long: Bifunctional riboflavin kinase/FMN adenylyltransferase (316 aa).

The protein belongs to the RibF family.

It catalyses the reaction riboflavin + ATP = FMN + ADP + H(+). The catalysed reaction is FMN + ATP + H(+) = FAD + diphosphate. It functions in the pathway cofactor biosynthesis; FAD biosynthesis; FAD from FMN: step 1/1. Its pathway is cofactor biosynthesis; FMN biosynthesis; FMN from riboflavin (ATP route): step 1/1. Catalyzes the phosphorylation of riboflavin to FMN followed by the adenylation of FMN to FAD. The polypeptide is Bifunctional riboflavin kinase/FMN adenylyltransferase (ribC) (Bacillus subtilis (strain 168)).